The sequence spans 757 residues: Transmembrane channel-like protein 1 (757 aa).

The disordered stretch occupies residues Met-1 to Glu-74. Over Met-1–Gly-176 the chain is Cytoplasmic. The segment covering Glu-8–Asp-23 has biased composition (acidic residues). Ser-30 is subject to Phosphoserine. The residue at position 38 (Thr-38) is a Phosphothreonine. Acidic residues predominate over residues Asn-43–Glu-54. A required for interaction with CIB2 region spans residues Glu-81–Lys-130. Phosphoserine is present on Ser-122. The helical transmembrane segment at Ser-177–Pro-214 threads the bilayer. Residues Tyr-215 to Phe-265 lie on the Extracellular side of the membrane. The helical transmembrane segment at Arg-266–Asp-297 threads the bilayer. Positions Gly-298–Ile-352 are required for interaction with CIB2. Residues Gly-298 to His-353 are Cytoplasmic-facing. Ser-308 bears the Phosphoserine mark. A helical membrane pass occupies residues Leu-354–Ser-384. At Gln-385–Gly-396 the chain is on the extracellular side. Thr-394 carries the phosphothreonine modification. Residues Trp-397–Leu-424 form a helical membrane-spanning segment. At Glu-425–His-428 the chain is on the cytoplasmic side. Residues Pro-429–Ile-463 form a helical membrane-spanning segment. At Glu-464 to Cys-512 the chain is on the extracellular side. A helical transmembrane segment spans residues Trp-513–Cys-550. The Cytoplasmic portion of the chain corresponds to Asn-551–Asp-569. The chain crosses the membrane as a helical span at residues Ile-570–Phe-590. Residues Ala-591–Ser-593 are Extracellular-facing. A helical transmembrane segment spans residues Leu-594 to Cys-616. Residues Asn-617 to Asn-630 are Cytoplasmic-facing. The chain crosses the membrane as a helical span at residues Asn-631–Ser-654. At Leu-655–Gly-697 the chain is on the extracellular side. The chain crosses the membrane as a helical span at residues Leu-698–Met-731. The Cytoplasmic segment spans residues Lys-732–Gln-757.

Belongs to the TMC family. In terms of assembly, forms the MET channel composed of TMC dimer (TMC1 or TMC2), TMIE, TOMT, CIB (CIB2 or CIB3), LHFPL5 and PCDH15. Interacts with PIEZO1 and PIEZO2; the interaction may be part of the MET complex. The interaction of TMC1 and TMC2 with TOMT is required for the transportation of TMC1/2 into the stereocilia of hair cells. Interacts (via N-terminus) with both isoforms CD1 and CD3 of PCDH15. Can form a heterodimer with TMC2, TMC5 or TMC7. Detected in cochlear inner and outer hair cells and in neurosensory epithelia of the vestibular end organs. Also expressed in cortex, cerebellum, eye, colon, ovary and testis.

It is found in the cell membrane. It catalyses the reaction Ca(2+)(in) = Ca(2+)(out). In terms of biological role, pore-forming subunit of the mechanotransducer (MET) non-selective cation channel complex located at the tips of stereocilia of cochlear hair cells and that mediates sensory transduction in the auditory system. The MET complex is composed of two dimeric pore-forming ion-conducting transmembrane TMC (TMC1 or TMC2) subunits, several auxiliary proteins including LHFPL5, TMIE, CIB2/3 and TOMT, the tip-link PCDH15, and possibly the PIEZO subunits. MET channel is activated by tension in the tip-link extending from the side wall of one stereocilium to the tip of the adjacent shorter stereocilium, where the channel is located. TMC1 MET channel is highly permeable to calcium and likely transports monovalent cations. Also involved in vestibular hair cells transduction current. This Mus musculus (Mouse) protein is Transmembrane channel-like protein 1.